Here is a 320-residue protein sequence, read N- to C-terminus: Mechanosensory protein 3 (320 aa).

LIM zinc-binding domains follow at residues 29 to 79 (CNCC…CSQH) and 89 to 145 (CAGC…CMTH). Positions 216 to 275 (RRGPRTTIKQNQLDVLNEMFSNTPKPSKHARAKKALETGLSMRVIQVWFQNRRSKERRLK) form a DNA-binding region, homeobox.

It localises to the nucleus. Functionally, specifies differentiation of the set of six touch receptor neurons. Binds cooperatively as a heterodimer with unc-86 to sites in the mec-3 gene promoter. The protein is Mechanosensory protein 3 (mec-3) of Caenorhabditis remanei (Caenorhabditis vulgaris).